The sequence spans 1224 residues: Coatomer subunit alpha (1224 aa).

WD repeat units follow at residues 7–37, 49–79, 91–121, and 133–163; these read TKSA…QLWD, EHDG…KVWN, GHLD…RVWN, and GHNH…RVWD. Ser-173 carries the phosphoserine modification. Phosphothreonine is present on Thr-185. WD repeat units lie at residues 203–233 and 247–277; these read GHDR…KIWR and GHYN…RVWD. Thr-591 is modified (phosphothreonine). Arg-965 carries the post-translational modification Omega-N-methylarginine. A Phosphoserine modification is found at Ser-1193.

As to quaternary structure, oligomeric complex that consists of at least the alpha, beta, beta', gamma, delta, epsilon and zeta subunits. Interacts with SCYL1. Interacts with JAGN1. Interacts with TMEM41B. Interacts with SVEP1. Probably interacts with PEX11A.

It localises to the cytoplasm. The protein resides in the golgi apparatus membrane. Its subcellular location is the cytoplasmic vesicle. It is found in the COPI-coated vesicle membrane. The protein localises to the secreted. Functionally, the coatomer is a cytosolic protein complex that binds to dilysine motifs and reversibly associates with Golgi non-clathrin-coated vesicles, which further mediate biosynthetic protein transport from the ER, via the Golgi up to the trans Golgi network. Coatomer complex is required for budding from Golgi membranes, and is essential for the retrograde Golgi-to-ER transport of dilysine-tagged proteins. In mammals, the coatomer can only be recruited by membranes associated to ADP-ribosylation factors (ARFs), which are small GTP-binding proteins; the complex also influences the Golgi structural integrity, as well as the processing, activity, and endocytic recycling of LDL receptors. Xenin stimulates exocrine pancreatic secretion. It inhibits pentagastrin-stimulated secretion of acid, to induce exocrine pancreatic secretion and to affect small and large intestinal motility. In the gut, xenin interacts with the neurotensin receptor. The protein is Coatomer subunit alpha (COPA) of Bos taurus (Bovine).